Consider the following 435-residue polypeptide: Methylenetetrahydrofolate--tRNA-(uracil-5-)-methyltransferase TrmFO (435 aa).

9–14 (GAGLAG) serves as a coordination point for FAD.

Belongs to the MnmG family. TrmFO subfamily. FAD is required as a cofactor.

Its subcellular location is the cytoplasm. The catalysed reaction is uridine(54) in tRNA + (6R)-5,10-methylene-5,6,7,8-tetrahydrofolate + NADH + H(+) = 5-methyluridine(54) in tRNA + (6S)-5,6,7,8-tetrahydrofolate + NAD(+). It catalyses the reaction uridine(54) in tRNA + (6R)-5,10-methylene-5,6,7,8-tetrahydrofolate + NADPH + H(+) = 5-methyluridine(54) in tRNA + (6S)-5,6,7,8-tetrahydrofolate + NADP(+). In terms of biological role, catalyzes the folate-dependent formation of 5-methyl-uridine at position 54 (M-5-U54) in all tRNAs. In Staphylococcus aureus (strain JH1), this protein is Methylenetetrahydrofolate--tRNA-(uracil-5-)-methyltransferase TrmFO.